The chain runs to 334 residues: Protein translocase subunit SecF (334 aa).

A run of 6 helical transmembrane segments spans residues 18 to 38 (VAAG…AVTG), 144 to 164 (GAAM…AIRF), 168 to 190 (FGLA…IKIF), 195 to 217 (SLTV…IIIF), 258 to 278 (ATLA…WVMA), and 279 to 299 (FGVV…LLWI).

It belongs to the SecD/SecF family. SecF subfamily. As to quaternary structure, forms a complex with SecD. Part of the essential Sec protein translocation apparatus which comprises SecA, SecYEG and auxiliary proteins SecDF. Other proteins may also be involved.

The protein resides in the cell inner membrane. Its function is as follows. Part of the Sec protein translocase complex. Interacts with the SecYEG preprotein conducting channel. SecDF uses the proton motive force (PMF) to complete protein translocation after the ATP-dependent function of SecA. In Gemmatimonas aurantiaca (strain DSM 14586 / JCM 11422 / NBRC 100505 / T-27), this protein is Protein translocase subunit SecF.